The following is a 498-amino-acid chain: O-methyltransferase OME1 (498 aa).

Polar residues predominate over residues 1–19; the sequence is MSTMALHRTASTKSDTTMA. 2 disordered regions span residues 1–23 and 42–83; these read MSTM…CPNG and HRAE…QPEY. The segment covering 50 to 65 has biased composition (low complexity); that stretch reads SSTSSVSTTPTSPSFS. Asp-358 provides a ligand contact to S-adenosyl-L-methionine. Residue His-406 is the Proton acceptor of the active site.

Belongs to the class I-like SAM-binding methyltransferase superfamily. Cation-independent O-methyltransferase family.

The protein operates within secondary metabolite biosynthesis. In terms of biological role, O-methyltransferase; part of the gene cluster that mediates the biosynthesis of a tyrosine-derived cytochalasan acting as a fungal signal recognized by resistant rice plants and leads to avirulence in Pi33 resistant rice cultivars. The first step in the pathway is catalyzed by the hybrid PKS-NRPS ACE1, assisted by the enoyl reductase RAP1, that are responsible for fusion of the tyrosine precursor and the polyketide backbone. The polyketide synthase module (PKS) of ACE1 is responsible for the synthesis of the polyketide backbone and the downstream nonribosomal peptide synthetase (NRPS) amidates the carboxyl end of the polyketide with the tyrosine precursor. Because ACE1 lacks a designated enoylreductase (ER) domain, the required activity is provided the enoyl reductase RAP1. Reduction by the hydrolyase ORFZ, followed by dehydration and intra-molecular Diels-Alder cyclization by the Diels-Alderase ORF3 then yield the required isoindolone-fused macrocycle. A number of oxidative steps catalyzed by the tailoring enzymes identified within the cluster, including cytochrome P450 monooxygenases CYP1 to CYP4, the FAD-linked oxidoreductase OXR2 and the short-chain dehydrogenase/reductase OXR1, are further required to afford the final cytochalasans that confer avirulence and which have still to be identified. The monooxygenase CYP1 has been shown to be a site-selective C-18 hydroxylase whereas the function of CYP3 is the site-selective epoxidation of the C-6/C-7 olefin that is present in some intermediate compounds. Finally, SYN2 and RAP2 are not required for avirulence in Pi33 resistant rice cultivars. This Pyricularia oryzae (strain 70-15 / ATCC MYA-4617 / FGSC 8958) (Rice blast fungus) protein is O-methyltransferase OME1.